A 1115-amino-acid chain; its full sequence is Neural cell adhesion molecule 1 (1115 aa).

The signal sequence occupies residues 1-19; sequence MLRTKDLIWTLFFLGTAVS. Ig-like C2-type domains are found at residues 20-111, 116-205, 212-302, 309-402, and 407-492; these read LQVD…ATVN, QKLM…KDIQ, PTVQ…ASIH, PKIT…MYLE, and PKLQ…ESLE. Topologically, residues 20–711 are extracellular; it reads LQVDIVPSQG…NGSPTAGLST (692 aa). Cystine bridges form between Cys-41–Cys-96 and Cys-139–Cys-189. Heparin-binding positions include 152–156 and 161–165; these read KHKGR and KKDVR. Residue Asn-222 is glycosylated (N-linked (GlcNAc...) asparagine; partial). Cys-235 and Cys-288 are joined by a disulfide. Residues Asn-316, Asn-348, Asn-424, Asn-450, and Asn-479 are each glycosylated (N-linked (GlcNAc...) asparagine). A disulfide bridge links Cys-330 with Cys-386. Cys-427 and Cys-480 are disulfide-bonded. Fibronectin type-III domains are found at residues 500–599 and 601–696; these read TPSS…TQPV and EPSA…SAQP. Thr-706 carries the GPI-anchor amidated serine lipid modification. A helical transmembrane segment spans residues 712–729; that stretch reads GAIVGILIVIFVLLLVVM. Residues 730–1115 are Cytoplasmic-facing; that stretch reads DITCYFLNKC…TQTKENESKA (386 aa). Disordered regions lie at residues 756–809, 839–912, and 924–1115; these read GAKG…TEPE, FATA…SASN, and VLSP…ESKA. Residues 758–799 are compositionally biased toward basic and acidic residues; the sequence is KGKDMEEGKAAFSKDESKEPIVEVRTEEERTPNHDGGKHTEP. 2 positions are modified to phosphoserine: Ser-770 and Ser-774. Composition is skewed to low complexity over residues 800 to 809, 845 to 856, and 876 to 896; these read NETTPLTEPE, SPTSETTTLTSS, and TPSK…KVAP. Phosphoserine is present on residues Ser-887 and Ser-890. Polar residues-rich tracts occupy residues 902–912 and 926–935; these read DTPTSAPSASN and SPSTPASAGE. Phosphoserine is present on Ser-926. Thr-929 bears the Phosphothreonine mark. Composition is skewed to low complexity over residues 936–974 and 999–1012; these read TSKA…PQAK and AATA…KAAT. 2 positions are modified to phosphoserine: Ser-946 and Ser-958. Thr-1001 is modified (phosphothreonine). Position 1005 is a phosphoserine (Ser-1005). Basic and acidic residues-rich tracts occupy residues 1019 to 1037 and 1074 to 1091; these read EDLK…DLAK and KTEK…ESEA. Thr-1030 carries the phosphothreonine modification.

In terms of assembly, interacts with MDK. Found in a complex with SLC39A6, SLC39A10 and with NCAM1; this complex controls NCAM1 phosphorylation and integration into focal adhesion complexes during epithelial-tomesenchymal transition. Interacts with synaptic plasticity regulator PANTS. Polysialylated by ST8SIA2 and ST8SIA4. Polysialylation modulates cell interactions by confering both attractive and repulsive properties that are highly regulated by ST8SIA2 and ST8SIA4. Polysialylation is formed on a-2,3-linked sialic acid of core glycans.

Its subcellular location is the cell membrane. Functionally, this protein is a cell adhesion molecule involved in neuron-neuron adhesion, neurite fasciculation, outgrowth of neurites, etc. This Mus musculus (Mouse) protein is Neural cell adhesion molecule 1.